The following is a 169-amino-acid chain: Phosphopantetheine adenylyltransferase (169 aa).

Residue S10 coordinates substrate. Residues 10–11 and H18 each bind ATP; that span reads SF. Positions 42, 79, and 93 each coordinate substrate. ATP-binding positions include 94–96, E104, and 129–135; these read GLR and VRPITAT.

It belongs to the bacterial CoaD family. Homohexamer. Mg(2+) is required as a cofactor.

It is found in the cytoplasm. The enzyme catalyses (R)-4'-phosphopantetheine + ATP + H(+) = 3'-dephospho-CoA + diphosphate. Its pathway is cofactor biosynthesis; coenzyme A biosynthesis; CoA from (R)-pantothenate: step 4/5. In terms of biological role, reversibly transfers an adenylyl group from ATP to 4'-phosphopantetheine, yielding dephospho-CoA (dPCoA) and pyrophosphate. The polypeptide is Phosphopantetheine adenylyltransferase (Rhodopseudomonas palustris (strain TIE-1)).